Here is a 645-residue protein sequence, read N- to C-terminus: Acetyl-coenzyme A synthetase (645 aa).

CoA-binding positions include 190 to 193 (RGGK) and T308. Residues 384-386 (GEP), 408-413 (DTWWQT), D497, and R512 each bind ATP. Position 520 (S520) interacts with CoA. Residue R523 coordinates ATP. Mg(2+) is bound by residues V534, H536, and I539. K606 carries the N6-acetyllysine modification.

It belongs to the ATP-dependent AMP-binding enzyme family. The cofactor is Mg(2+). In terms of processing, acetylated. Deacetylation by the SIR2-homolog deacetylase activates the enzyme.

The enzyme catalyses acetate + ATP + CoA = acetyl-CoA + AMP + diphosphate. Functionally, catalyzes the conversion of acetate into acetyl-CoA (AcCoA), an essential intermediate at the junction of anabolic and catabolic pathways. AcsA undergoes a two-step reaction. In the first half reaction, AcsA combines acetate with ATP to form acetyl-adenylate (AcAMP) intermediate. In the second half reaction, it can then transfer the acetyl group from AcAMP to the sulfhydryl group of CoA, forming the product AcCoA. The sequence is that of Acetyl-coenzyme A synthetase from Alcanivorax borkumensis (strain ATCC 700651 / DSM 11573 / NCIMB 13689 / SK2).